A 429-amino-acid chain; its full sequence is Metacaspase-1A (429 aa).

The interval 1 to 68 is disordered; the sequence is MQHHHQGSYG…PQHNGGQMYG (68 aa). Residues 8 to 19 show a composition bias toward gly residues; that stretch reads SYGGGGGGGGYP. The span at 20 to 45 shows a compositional bias: low complexity; it reads GQAYREQNPYGYGQQSPQQGYGAPQQ. Residues 46–62 are compositionally biased toward polar residues; that stretch reads HNGYNQPPSGYGQPQHN. Residues histidine 220 and cysteine 276 contribute to the active site.

The protein belongs to the peptidase C14B family.

Its function is as follows. Involved in cell death (apoptosis). The chain is Metacaspase-1A (casA) from Aspergillus clavatus (strain ATCC 1007 / CBS 513.65 / DSM 816 / NCTC 3887 / NRRL 1 / QM 1276 / 107).